We begin with the raw amino-acid sequence, 89 residues long: uncharacterized protein (89 aa).

A helical membrane pass occupies residues 39–61; it reads FVCFWSIWFWTGDISFSLLSMLV.

Its subcellular location is the membrane. This is an uncharacterized protein from Saccharomyces cerevisiae (strain ATCC 204508 / S288c) (Baker's yeast).